The chain runs to 461 residues: Acetylcholine receptor subunit alpha (461 aa).

The N-terminal stretch at 1–24 (MILCSYWHVGLVLLLFSCCGLVLG) is a signal peptide. Residues 25–234 (SEHETRLVAN…ITYHFIMQRI (210 aa)) are Extracellular-facing. Intrachain disulfides connect Cys-152-Cys-166 and Cys-216-Cys-217. N-linked (GlcNAc...) asparagine glycosylation is present at Asn-165. The next 3 helical transmembrane spans lie at 235 to 259 (PLYFVVNVIIPCLLFSFLTGLVFYL), 267 to 285 (MTLSISVLLSLTVFLLVIV), and 301 to 320 (YMLFTMIFVISSIIITVVVI). Residues 321-432 (NTHHRSPSTH…WKYVAMVIDH (112 aa)) lie on the Cytoplasmic side of the membrane. The chain crosses the membrane as a helical span at residues 433–451 (ILLCVFMLICIIGTVSVFA).

This sequence belongs to the ligand-gated ion channel (TC 1.A.9) family. Acetylcholine receptor (TC 1.A.9.1) subfamily. Alpha-1/CHRNA1 sub-subfamily. Pentamer of two alpha chains, and one each of the beta, delta, and gamma chains.

It is found in the postsynaptic cell membrane. The protein localises to the cell membrane. It catalyses the reaction K(+)(in) = K(+)(out). The enzyme catalyses Na(+)(in) = Na(+)(out). Its function is as follows. Upon acetylcholine binding, the AChR responds by an extensive change in conformation that affects all subunits and leads to opening of an ion-conducting channel across the plasma membrane. The polypeptide is Acetylcholine receptor subunit alpha (CHRNA1) (Tetronarce californica (Pacific electric ray)).